Consider the following 681-residue polypeptide: MEKQIQVTLPDGTVKTFPAGTTPFQVAESISPRLAQAAVVARIQTTQPAAATVTAGSEADSKTASEAAMYSAADPGAPRLVDLSTPLEEDVQLALLTEKDPEALKVLRHSAAHLMATAVLELFPETKLGHGPATDAGFFYDFYRPTPFTPEDLKLIEGRMAEIAQRNDKFVREFIPREEGLAEFKAGDDFMKVHFIERFTQPGEAISLYRNGNFVDFCRGPHVPSTNRIKAFKVTNLAGAYWLGDEKNPQLQRLYGTAFFSKKDLDEHFARLEEIAKRDHRVLGKQLDLFSIQEIAGAGLIFWHPKGAMIRKIMEDWMREECIRRGYDLVYTPHVMRVQLWKTSGHEGFYSQNMFTPMELDDAEYRLKPMNCPGHILIYKSQPRSYRDLPVRYAELGNVYRYERSGTMHGLLRVRGFTQDDAHIFCTPEQIEDEVVACIDFAQSVLTTFGFMDFQVELSTWDPNDRKNYAGSDDKWNLAISSLESALTRKGIAYKTIAGEAAFYGPKIDIKLVDVLGRLWQLSTVQFDFNLPARFELEYVGEDGERHQPVMVHRALYGSVERFFGVLIEHYAGAFPLWLAPVQIGLVPISERHLAYAEKVQQQLEAAGFRVELDRRNEKMNAKIRDFTLQKFPYVLIMGDKEAEAGAVSVRTRGKGDQGSLPLDEFIGRATTLIDTKSGDL.

The TGS domain occupies K3 to T97. The segment at D279 to P576 is catalytic. 3 residues coordinate Zn(2+): C372, H423, and H553.

It belongs to the class-II aminoacyl-tRNA synthetase family. As to quaternary structure, homodimer. Zn(2+) is required as a cofactor.

The protein resides in the cytoplasm. It catalyses the reaction tRNA(Thr) + L-threonine + ATP = L-threonyl-tRNA(Thr) + AMP + diphosphate + H(+). Functionally, catalyzes the attachment of threonine to tRNA(Thr) in a two-step reaction: L-threonine is first activated by ATP to form Thr-AMP and then transferred to the acceptor end of tRNA(Thr). Also edits incorrectly charged L-seryl-tRNA(Thr). In Acidobacterium capsulatum (strain ATCC 51196 / DSM 11244 / BCRC 80197 / JCM 7670 / NBRC 15755 / NCIMB 13165 / 161), this protein is Threonine--tRNA ligase.